Consider the following 268-residue polypeptide: Glutamine amidotransferase-like class 1 domain-containing protein 3, mitochondrial (268 aa).

A mitochondrion-targeting transit peptide spans 1–41 (MAAVRVLVASRLAAASAFTSLSPGGRTPSQRAALHLSVPRP). N6-acetyllysine occurs at positions 151, 157, and 164. Lys-203 is subject to N6-acetyllysine; alternate. Residue Lys-203 is modified to N6-succinyllysine; alternate. Lys-219 is modified (N6-acetyllysine). 2 positions are modified to N6-acetyllysine; alternate: Lys-223 and Lys-233. N6-succinyllysine; alternate occurs at positions 223 and 233.

The protein belongs to the GATD3 family.

Its subcellular location is the mitochondrion. The polypeptide is Glutamine amidotransferase-like class 1 domain-containing protein 3, mitochondrial (Homo sapiens (Human)).